A 331-amino-acid chain; its full sequence is MKIAIDAMGGDFAPENIVKGVNLAKKELSDVTFQLYGDGAKIRQFLDDETNIEIVETTEIIDFHDDPVAAIKSKKDSSLVRAVTAVKKGEADAVLSAGSTGALLTAGLLLVKRIKQVSRPALMSTLPTADGRGFDMLDLGANTENTAHHLVDFAILGSYYAENVRGINKPRVALISNGAEESKGSPTVKEAHEILSAMSEINFIGNIESRDLLSGGADVVVTDGFTGNAILKAIEGTATVLMKEIKSAIMAGSVTTKIGGALIKKPLSVLKDLMSTDGAGGAAFVGLKAPVVKAHGNSSELAIASALKQIHKMLESDVSGKLVEHFEKMDK.

Belongs to the PlsX family. As to quaternary structure, homodimer. Probably interacts with PlsY.

The protein resides in the cytoplasm. The catalysed reaction is a fatty acyl-[ACP] + phosphate = an acyl phosphate + holo-[ACP]. The protein operates within lipid metabolism; phospholipid metabolism. Catalyzes the reversible formation of acyl-phosphate (acyl-PO(4)) from acyl-[acyl-carrier-protein] (acyl-ACP). This enzyme utilizes acyl-ACP as fatty acyl donor, but not acyl-CoA. The sequence is that of Phosphate acyltransferase from Lactococcus lactis subsp. lactis (strain IL1403) (Streptococcus lactis).